A 190-amino-acid chain; its full sequence is MAEETNQSLEDQNVQVEEGQTISDEAIEQAVEGAEKELDNAKKEIESLKDSWLRERAEFQNYKRRTANDLLNARKESIKKFAEGLTGALDNLERVSNVPNQTPEVVAFVEGIKMVQKEFYSVLEKEGIKRLDPKGQPFDPMLMEAIASEESAEFTEETVVETYQAGYYHEEGESKQSIRPARVKVGKPQS.

Disordered stretches follow at residues 1–22 and 170–190; these read MAEE…GQTI and EEGE…KPQS. Residues 181 to 190 are compositionally biased toward basic residues; the sequence is ARVKVGKPQS.

The protein belongs to the GrpE family. Homodimer.

Its subcellular location is the cytoplasm. In terms of biological role, participates actively in the response to hyperosmotic and heat shock by preventing the aggregation of stress-denatured proteins, in association with DnaK and GrpE. It is the nucleotide exchange factor for DnaK and may function as a thermosensor. Unfolded proteins bind initially to DnaJ; upon interaction with the DnaJ-bound protein, DnaK hydrolyzes its bound ATP, resulting in the formation of a stable complex. GrpE releases ADP from DnaK; ATP binding to DnaK triggers the release of the substrate protein, thus completing the reaction cycle. Several rounds of ATP-dependent interactions between DnaJ, DnaK and GrpE are required for fully efficient folding. This is Protein GrpE from Leptospira biflexa serovar Patoc (strain Patoc 1 / Ames).